Consider the following 776-residue polypeptide: ADP-ribosylation factor GTPase-activating protein AGD2 (776 aa).

In terms of domain architecture, BAR spans 2 to 226 (AGFINLEDSP…IHQVLTYAQQ (225 aa)). Residues 248-267 (QSELDSQQASAKADPSDVGG) form a disordered region. The PH domain occupies 290 to 421 (EVTKQGYLLK…WVNKITAAIT (132 aa)). The Arf-GAP domain maps to 467–604 (DDVLTILREI…ALVVKDEREA (138 aa)). The C4-type zinc-finger motif lies at 482 to 505 (CAECNAPDPDWASLNLGVLMCIEC). 2 ANK repeats span residues 683–712 (QGCS…DINM) and 716–745 (HGRT…RPSI).

Expressed in roots, hypocotyls, cotyledons, leaf and shoot apical meristems and siliques.

In terms of biological role, probable GTPase-activating protein. This is ADP-ribosylation factor GTPase-activating protein AGD2 (AGD2) from Arabidopsis thaliana (Mouse-ear cress).